A 251-amino-acid polypeptide reads, in one-letter code: Phosphate import ATP-binding protein PstB 2 (251 aa).

The ABC transporter domain maps to 5–246; that stretch reads ITTKDVHLYY…PDKEQTADYL (242 aa). ATP is bound at residue 37 to 44; it reads GPSGCGKS.

It belongs to the ABC transporter superfamily. Phosphate importer (TC 3.A.1.7) family. In terms of assembly, the complex is composed of two ATP-binding proteins (PstB), two transmembrane proteins (PstC and PstA) and a solute-binding protein (PstS).

The protein resides in the cell membrane. It carries out the reaction phosphate(out) + ATP + H2O = ADP + 2 phosphate(in) + H(+). Part of the ABC transporter complex PstSACB involved in phosphate import. Responsible for energy coupling to the transport system. This chain is Phosphate import ATP-binding protein PstB 2, found in Ligilactobacillus salivarius (strain UCC118) (Lactobacillus salivarius).